The following is a 622-amino-acid chain: Palmitoyltransferase ZDHHC13 (622 aa).

Met-1 is modified (N-acetylmethionine). Topologically, residues 1 to 291 (MEGPGLGSQC…RLWRWLQKCE (291 aa)) are cytoplasmic. 7 ANK repeats span residues 43–78 (PLIEDSSNCDIVKATQYGIFERCKELVEAGYDVRQP), 81–110 (ENVSLLHWAAINNRLDLVKFYISKGAVVDQ), 115–144 (LNSTPLHWAIRQGHLPMVILLLQHGADPTL), 148–177 (EGFSSIHLAVLFQHMPIIAYLISKGQSVNM), 181–211 (NGQTPLMLSAHKVIGPEPTGFLLKFNPSLNV), 216–245 (HQNTPLHWAVAAGNVNAVDKLLEAGSSLDI), and 249–277 (KGETPLDMALQNKNQLIIHMLKTEAKMRA). A helical transmembrane segment spans residues 292–312 (LFLLLMLSVITMWAIGYILDF). Over 313 to 320 (NSDSWLLK) the chain is Lumenal. A helical transmembrane segment spans residues 321-341 (GCLLVTLFFLTSLFPRFLVGY). The Cytoplasmic portion of the chain corresponds to 342-347 (KNLVYL). The helical transmembrane segment at 348 to 368 (PTAFLLSSVFWIFMTWFILFF) threads the bilayer. Residues 369–370 (PD) lie on the Lumenal side of the membrane. The chain crosses the membrane as a helical span at residues 371–391 (LAGAPFYFSFIFSIVAFLYFF). At 392-470 (YKTWATDPGF…RCIGFGNHHY (79 aa)) the chain is on the cytoplasmic side. In terms of domain architecture, DHHC spans 426-476 (TFCTSCLIRKPLRSLHCHVCNCCVARYDQHCLWTGRCIGFGNHHYYIFFLF). Residue Cys-456 is the S-palmitoyl cysteine intermediate of the active site. The helical transmembrane segment at 471–491 (YIFFLFFLSMVCGWIIYGSFI) threads the bilayer. The Lumenal portion of the chain corresponds to 492–518 (YLSSHCATTFKEDGLWTYLNQIVACSP). The helical transmembrane segment at 519 to 539 (WVLYILMLATFHFSWSTFLLL) threads the bilayer. Residues 540-622 (NQLFQIAFLG…PAREKVLRSV (83 aa)) lie on the Cytoplasmic side of the membrane.

It belongs to the DHHC palmitoyltransferase family. AKR/ZDHHC17 subfamily. As to quaternary structure, interacts (via ANK repeats) with CLIP3. Interacts (via ANK repeats) with DNAJC5 (via C-terminus). Interacts (via ANK repeats) with HTT. Interacts (via ANK repeats) with MAP6. Interacts (via ANK repeats) with SNAP23. Interacts (via ANK repeats) with SNAP25. May interact (via ANK repeats) with SPRED2.

The protein resides in the golgi apparatus membrane. Its subcellular location is the cytoplasmic vesicle membrane. The enzyme catalyses L-cysteinyl-[protein] + hexadecanoyl-CoA = S-hexadecanoyl-L-cysteinyl-[protein] + CoA. In terms of biological role, palmitoyltransferase that could catalyze the addition of palmitate onto various protein substrates. Palmitoyltransferase for HTT and GAD2. May play a role in Mg(2+) transport. The chain is Palmitoyltransferase ZDHHC13 from Homo sapiens (Human).